Consider the following 107-residue polypeptide: Cell division protein FtsB (107 aa).

Over 1-3 the chain is Cytoplasmic; the sequence is MGK. Residues 4–21 form a helical membrane-spanning segment; the sequence is LTLLLLILLGWLQYSLWL. Residues 22 to 107 lie on the Periplasmic side of the membrane; it reads GKNGVHDFVR…IPSTQNNAQQ (86 aa). The stretch at 39–62 forms a coiled coil; it reads QEVNNGKLKARNDQLFAEIDDLNG.

This sequence belongs to the FtsB family. In terms of assembly, part of a complex composed of FtsB, FtsL and FtsQ.

The protein localises to the cell inner membrane. Its function is as follows. Essential cell division protein. May link together the upstream cell division proteins, which are predominantly cytoplasmic, with the downstream cell division proteins, which are predominantly periplasmic. The polypeptide is Cell division protein FtsB (Yersinia enterocolitica serotype O:8 / biotype 1B (strain NCTC 13174 / 8081)).